Reading from the N-terminus, the 428-residue chain is Adenylosuccinate synthetase (428 aa).

GTP contacts are provided by residues 11–17 (GDEGKGK) and 39–41 (GHT). Asp12 serves as the catalytic Proton acceptor. 2 residues coordinate Mg(2+): Asp12 and Gly39. Residues 12–15 (DEGK), 37–40 (NAGH), Thr130, Arg144, Asn226, Thr241, and Arg305 each bind IMP. The Proton donor role is filled by His40. 301 to 307 (VTTGRKR) provides a ligand contact to substrate. GTP is bound by residues Arg307, 333–335 (KLD), and 415–417 (GTG).

Belongs to the adenylosuccinate synthetase family. In terms of assembly, homodimer. Mg(2+) is required as a cofactor.

The protein localises to the cytoplasm. It carries out the reaction IMP + L-aspartate + GTP = N(6)-(1,2-dicarboxyethyl)-AMP + GDP + phosphate + 2 H(+). It functions in the pathway purine metabolism; AMP biosynthesis via de novo pathway; AMP from IMP: step 1/2. Plays an important role in the de novo pathway and in the salvage pathway of purine nucleotide biosynthesis. Catalyzes the first committed step in the biosynthesis of AMP from IMP. This chain is Adenylosuccinate synthetase, found in Candida dubliniensis (strain CD36 / ATCC MYA-646 / CBS 7987 / NCPF 3949 / NRRL Y-17841) (Yeast).